We begin with the raw amino-acid sequence, 1342 residues long: DNA-directed RNA polymerase subunit beta (1342 aa).

2 positions are modified to N6-acetyllysine: K1022 and K1200.

The protein belongs to the RNA polymerase beta chain family. As to quaternary structure, the RNAP catalytic core consists of 2 alpha, 1 beta, 1 beta' and 1 omega subunit. When a sigma factor is associated with the core the holoenzyme is formed, which can initiate transcription.

It catalyses the reaction RNA(n) + a ribonucleoside 5'-triphosphate = RNA(n+1) + diphosphate. Its function is as follows. DNA-dependent RNA polymerase catalyzes the transcription of DNA into RNA using the four ribonucleoside triphosphates as substrates. This is DNA-directed RNA polymerase subunit beta from Shigella dysenteriae serotype 1 (strain Sd197).